The following is a 260-amino-acid chain: BTB/POZ domain-containing protein KCTD21 (260 aa).

In terms of domain architecture, BTB spans 3 to 72 (DPITLNVGGK…LRTSHLDLPE (70 aa)). A coiled-coil region spans residues 88–112 (QVQPLIEALQEKEVELSKAEKNAML).

Homopentamer. Interacts with KCTD11; KCTD21 and KCTD11 may associate in pentameric assemblies. Interacts (via BTB domain) with CUL3; indicative for a participation in a BCR (BTB-CUL3-RBX1) E3 ubiquitin-protein ligase complex. As to expression, highly expressed in cerebellum and brain. Expression is down-regulated in medulloblastoma.

The protein operates within protein modification; protein ubiquitination. Functionally, probable substrate-specific adapter of a BCR (BTB-CUL3-RBX1) E3 ubiquitin-protein ligase complex mediating the ubiquitination and subsequent proteasomal degradation of target proteins. Promotes the ubiquitination of HDAC1. Can function as antagonist of the Hedgehog pathway by affecting the nuclear transfer of transcription factor GLI1; the function probably occurs via HDAC1 down-regulation, keeping GLI1 acetylated and inactive. Inhibits cell growth and tumorigenicity of medulloblastoma (MDB). This chain is BTB/POZ domain-containing protein KCTD21 (KCTD21), found in Homo sapiens (Human).